Reading from the N-terminus, the 135-residue chain is MALRNKAFHQLRQLFQQHTARWQHELPDLTKPQYAVMRAIADKPGIEQVALIEAAVSTKATLAEMLARMENRGLVRREHDAADKRRRFVWLTAEGEKVLAAAIPIGDSVDEEFLGRLSAEEQELFMQLVRKMMNT.

The HTH marR-type domain occupies 4–134 (RNKAFHQLRQ…FMQLVRKMMN (131 aa)). Positions 48-71 (QVALIEAAVSTKATLAEMLARMEN) form a DNA-binding region, H-T-H motif.

In terms of biological role, involved in the temperature-dependent positive control of flagellum-driven swimming motility and cellular aggregation. Regulates fliC expression by directly interacting with fliC promoter. The chain is Transcriptional regulator HosA (hosA) from Escherichia coli O127:H6 (strain E2348/69 / EPEC).